A 421-amino-acid chain; its full sequence is MKLVVVGLNHKSAPVSLREKVAYSSDTLPRSLQALTRLDAVHEGTILSTCNRVEIYMASRDPDAAAAQTSQWIARDHALDPADVTPHLYTKAESEAVRHGFCVASSLDSMVLGEAQILGQMKQAYQDALSAGSTGVVLNRFFQHAFLTAKRVRTETSIAENSVSVASAAVDLAKRIFGDLSGHSCLLIGAGEMCELAARHLVTHGVKEVLVTNRTFSRAVDLAQQFDGHAFPIEALAENLHRADIVISSTGSTVYMVGPDMVKQALKSRRQRPIFLIDIAVPRDLDPEIGQVDSAFLYDMDDLNKIVNDNRQDRAEAAQAAMQIIEGETPLFIQWLDTLDVVPTIKQMRRKAEAAKDQLLQKHLAGWDLSDTDRQRVENLARQLVNKLMHDPTERLRSLTNEHDGDRYIDAARKLYKLDDD.

Substrate-binding positions include 49 to 52 (TCNR), serine 109, 114 to 116 (EAQ), and glutamine 120. Cysteine 50 acts as the Nucleophile in catalysis. 189–194 (GAGEMC) contributes to the NADP(+) binding site.

It belongs to the glutamyl-tRNA reductase family. Homodimer.

The enzyme catalyses (S)-4-amino-5-oxopentanoate + tRNA(Glu) + NADP(+) = L-glutamyl-tRNA(Glu) + NADPH + H(+). It functions in the pathway porphyrin-containing compound metabolism; protoporphyrin-IX biosynthesis; 5-aminolevulinate from L-glutamyl-tRNA(Glu): step 1/2. In terms of biological role, catalyzes the NADPH-dependent reduction of glutamyl-tRNA(Glu) to glutamate 1-semialdehyde (GSA). This chain is Glutamyl-tRNA reductase, found in Magnetococcus marinus (strain ATCC BAA-1437 / JCM 17883 / MC-1).